The sequence spans 463 residues: Bifunctional protein HldE (463 aa).

The tract at residues 1–315 (MKKILVIGDL…LILNQTHPKI (315 aa)) is ribokinase. 191–194 (NRAE) serves as a coordination point for ATP. The active site involves Asp-260. A cytidylyltransferase region spans residues 334 to 463 (FTNGCFDILH…IEKIKRTHND (130 aa)).

It in the N-terminal section; belongs to the carbohydrate kinase PfkB family. The protein in the C-terminal section; belongs to the cytidylyltransferase family. In terms of assembly, homodimer.

The enzyme catalyses D-glycero-beta-D-manno-heptose 7-phosphate + ATP = D-glycero-beta-D-manno-heptose 1,7-bisphosphate + ADP + H(+). It carries out the reaction D-glycero-beta-D-manno-heptose 1-phosphate + ATP + H(+) = ADP-D-glycero-beta-D-manno-heptose + diphosphate. The protein operates within nucleotide-sugar biosynthesis; ADP-L-glycero-beta-D-manno-heptose biosynthesis; ADP-L-glycero-beta-D-manno-heptose from D-glycero-beta-D-manno-heptose 7-phosphate: step 1/4. It functions in the pathway nucleotide-sugar biosynthesis; ADP-L-glycero-beta-D-manno-heptose biosynthesis; ADP-L-glycero-beta-D-manno-heptose from D-glycero-beta-D-manno-heptose 7-phosphate: step 3/4. Its pathway is bacterial outer membrane biogenesis; LPS core biosynthesis. Its function is as follows. Catalyzes the phosphorylation of D-glycero-D-manno-heptose 7-phosphate at the C-1 position to selectively form D-glycero-beta-D-manno-heptose-1,7-bisphosphate. Functionally, catalyzes the ADP transfer from ATP to D-glycero-beta-D-manno-heptose 1-phosphate, yielding ADP-D-glycero-beta-D-manno-heptose. The polypeptide is Bifunctional protein HldE (Helicobacter pylori (strain J99 / ATCC 700824) (Campylobacter pylori J99)).